The sequence spans 279 residues: Thymidylate synthase (279 aa).

Arg-141–Arg-142 is a dUMP binding site. Cys-161 functions as the Nucleophile in the catalytic mechanism. DUMP-binding positions include Arg-181–Asp-184, Asn-192, and His-222–Tyr-224. Asp-184 provides a ligand contact to (6R)-5,10-methylene-5,6,7,8-tetrahydrofolate. Ala-278 lines the (6R)-5,10-methylene-5,6,7,8-tetrahydrofolate pocket.

This sequence belongs to the thymidylate synthase family. Bacterial-type ThyA subfamily. In terms of assembly, homodimer.

The protein resides in the cytoplasm. It carries out the reaction dUMP + (6R)-5,10-methylene-5,6,7,8-tetrahydrofolate = 7,8-dihydrofolate + dTMP. Its pathway is pyrimidine metabolism; dTTP biosynthesis. In terms of biological role, catalyzes the reductive methylation of 2'-deoxyuridine-5'-monophosphate (dUMP) to 2'-deoxythymidine-5'-monophosphate (dTMP) while utilizing 5,10-methylenetetrahydrofolate (mTHF) as the methyl donor and reductant in the reaction, yielding dihydrofolate (DHF) as a by-product. This enzymatic reaction provides an intracellular de novo source of dTMP, an essential precursor for DNA biosynthesis. The polypeptide is Thymidylate synthase (Bacillus subtilis subsp. natto).